The chain runs to 1009 residues: Membrane alanyl aminopeptidase (1009 aa).

A signal peptide spans 1 to 15 (MAAIKLLVLSLACAC). Residues 16 to 52 (VIAHSPIPPASRTIFLDERLEGGAFENIDAFENIELS) constitute a propeptide, activation peptide. 338–342 (GAMEN) is a binding site for substrate. Position 374 (His374) interacts with Zn(2+). Catalysis depends on Glu375, which acts as the Proton acceptor. Zn(2+) is bound by residues His378 and Glu397. N-linked (GlcNAc...) asparagine glycosylation is present at Asn906. Residues 955–980 (PSTSTTSTTAAPTTVTQPTITEPSTP) are disordered. Asp987 is lipidated: GPI-anchor amidated aspartate. A propeptide spans 988-1009 (SAMTSFASLFIISLGAILHLIL) (removed in mature form).

This sequence belongs to the peptidase M1 family. Zn(2+) serves as cofactor.

It is found in the cell membrane. Its function is as follows. Binds to the B.thuringiensis toxin, CryIA(C). This Heliothis virescens (Tobacco budworm moth) protein is Membrane alanyl aminopeptidase.